The chain runs to 253 residues: MAASGESGTSGGGGSTEEAFMTFYSEVKQIEKRDSVLTSKNQIERLTRPGSSYFNLNPFEVLQIDPEVTDEEIKKRFRQLSILVHPDKNQDDADRAQKAFEAVDKAYKLLLDQEQKKRALDVIQAGKEYVEHTVKERKKQLKKEGKPTIVEEDDPELFKQAVYKQTMKLFAELEIKRKEREAKEMHERKRQREEEIEAQEKAKREREWQKNFEESRDGRVDSWRNFQANTKGKKEKKNRTFLRPPKVKMEQRE.

Position 2 is an N-acetylalanine (alanine 2). Position 35 is a phosphoserine (serine 35). In terms of domain architecture, J spans 57–124 (NPFEVLQIDP…QKKRALDVIQ (68 aa)). N6-acetyllysine is present on lysine 146. Basic and acidic residues predominate over residues 181–222 (EAKEMHERKRQREEEIEAQEKAKREREWQKNFEESRDGRVDS). The interval 181-253 (EAKEMHERKR…PPKVKMEQRE (73 aa)) is disordered. Short sequence motifs (nuclear localization signal) lie at residues 189-192 (KRQR) and 203-206 (KRER). Serine 222 carries the post-translational modification Phosphoserine. A compositionally biased stretch (basic residues) spans 231–240 (KGKKEKKNRT). Residues 232-253 (GKKEKKNRTFLRPPKVKMEQRE) form an essential for polyglutamine aggregation suppression region.

As to quaternary structure, interacts with SRPK1. Interacts with HSP70 (HSPA1A or HSPA1B). In terms of tissue distribution, ubiquitous.

The protein localises to the nucleus. In terms of biological role, suppresses polyglutamine (polyQ) aggregation of ATXN3 in neuronal cells. This chain is DnaJ homolog subfamily C member 8 (DNAJC8), found in Homo sapiens (Human).